The primary structure comprises 676 residues: DNA ligase (676 aa).

NAD(+) contacts are provided by residues 35 to 39 (DAEYD), 84 to 85 (SL), and Glu118. Lys120 acts as the N6-AMP-lysine intermediate in catalysis. The NAD(+) site is built by Arg141, Glu176, Lys284, and Lys308. Zn(2+) is bound by residues Cys402, Cys405, Cys420, and Cys426. In terms of domain architecture, BRCT spans 595–676 (SYLSLIHGKI…WLQYTQSSEN (82 aa)).

Belongs to the NAD-dependent DNA ligase family. LigA subfamily. Requires Mg(2+) as cofactor. The cofactor is Mn(2+).

The enzyme catalyses NAD(+) + (deoxyribonucleotide)n-3'-hydroxyl + 5'-phospho-(deoxyribonucleotide)m = (deoxyribonucleotide)n+m + AMP + beta-nicotinamide D-nucleotide.. Functionally, DNA ligase that catalyzes the formation of phosphodiester linkages between 5'-phosphoryl and 3'-hydroxyl groups in double-stranded DNA using NAD as a coenzyme and as the energy source for the reaction. It is essential for DNA replication and repair of damaged DNA. This chain is DNA ligase, found in Ehrlichia chaffeensis (strain ATCC CRL-10679 / Arkansas).